We begin with the raw amino-acid sequence, 569 residues long: Melanophilin (569 aa).

Residues 4–124 (KLDLSKLTDD…MGSLEWYYGH (121 aa)) form the RabBD domain. The segment at 58-112 (HLNETHCARCLQPYRLLVAPKRQCLDCHLFTCQDCSHAHPEEEGWLCDPCHLARV) adopts an FYVE-type zinc-finger fold. The interval 143–430 (GRLQGGGGPE…MQPGRTTDQE (288 aa)) is disordered. Basic and acidic residues-rich tracts occupy residues 352–362 (ETLKRKLEEMT) and 379–390 (EEEAGLNRKTSI). The span at 404 to 415 (SGQTSRQETSPR) shows a compositional bias: polar residues. The stretch at 431 to 465 (LLELEDRVAVTASEVQQVESEVSNIKSKIAALQAA) forms a coiled coil. Positions 490–569 (GRLGQTPKDP…FAKPVMTQRP (80 aa)) are disordered. Residues 526-535 (SQDKAGDSFD) are compositionally biased toward basic and acidic residues.

In terms of assembly, binds RAB27A that has been activated by GTP-binding via its N-terminus. Binds MYO5A via its C-terminal coiled coil domain.

Its subcellular location is the melanosome. Functionally, rab effector protein involved in melanosome transport. Serves as link between melanosome-bound RAB27A and the motor protein MYO5A. The polypeptide is Melanophilin (MLPH) (Felis catus (Cat)).